Consider the following 238-residue polypeptide: Survival of motor neuron-related-splicing factor 30 (238 aa).

The Tudor domain occupies 72 to 132 (SWKVGEKCMA…RPVEEGRKAK (61 aa)). Residues 142-160 (KKEMIAAQREYKKKKALKK) carry the Nuclear localization signal motif.

This sequence belongs to the SMN family. In terms of assembly, associates with spliceosomes.

It is found in the nucleus speckle. The protein localises to the nucleus. The protein resides in the cajal body. Involved in spliceosome assembly. This Xenopus tropicalis (Western clawed frog) protein is Survival of motor neuron-related-splicing factor 30 (smndc1).